Consider the following 313-residue polypeptide: Ribosomal RNA small subunit methyltransferase H (313 aa).

Residues 33 to 35 (AGH), Asp53, Phe82, Asp103, and Gln110 each bind S-adenosyl-L-methionine.

It belongs to the methyltransferase superfamily. RsmH family.

The protein resides in the cytoplasm. It carries out the reaction cytidine(1402) in 16S rRNA + S-adenosyl-L-methionine = N(4)-methylcytidine(1402) in 16S rRNA + S-adenosyl-L-homocysteine + H(+). Functionally, specifically methylates the N4 position of cytidine in position 1402 (C1402) of 16S rRNA. The polypeptide is Ribosomal RNA small subunit methyltransferase H (Ruminiclostridium cellulolyticum (strain ATCC 35319 / DSM 5812 / JCM 6584 / H10) (Clostridium cellulolyticum)).